The sequence spans 327 residues: MPGPTQTLSPNGENNNDVIHDNGTIIPFRKHTVRGERSYSWGMAVNVYSTSITQETMSRHDIIAWVNDIVCLNYIKVEQLSSGAAYCQFMDMLFPGCISLKKVKFQAKLEHEYIHNFKLLQASFKRMNVDKVIPVEKLVKGRFQDNLDFIQWFKKFFDANYDGKEYDPMEARQGQDALPPPDPGEQIFNLPKKPHHANSPTAGAARSSPIAKPGSTSSRPSSAKKAVPCPSVKSDKDLETQVSHLNEQVHSLKIALEGVEKERDFYFGKLREIELLCQEHGQEGDDLLQRLMDILYSSEEQESHTEQHEGEEEQEHGHEEAEQQEEY.

Over residues 1-17 the composition is skewed to polar residues; sequence MPGPTQTLSPNGENNND. The interval 1 to 20 is disordered; the sequence is MPGPTQTLSPNGENNNDVIH. Residues 56–158 form the Calponin-homology (CH) domain; the sequence is TMSRHDIIAW…FIQWFKKFFD (103 aa). 2 disordered regions span residues 170–238 and 295–327; these read EARQ…DKDL and LYSS…QEEY. In terms of domain architecture, EB1 C-terminal spans 234–304; the sequence is SDKDLETQVS…LYSSEEQESH (71 aa).

This sequence belongs to the MAPRE family.

It is found in the cytoplasm. The protein localises to the cytoskeleton. In terms of biological role, may be involved in microtubule polymerization, and spindle function by stabilizing microtubules and anchoring them at centrosomes. This chain is Microtubule-associated protein RP/EB family member 2 (mapre2), found in Xenopus laevis (African clawed frog).